We begin with the raw amino-acid sequence, 267 residues long: Myeloid leukemia factor 1 (267 aa).

Residues Ser6, Ser8, Ser32, and Ser34 each carry the phosphoserine modification. Residues Arg39–Ala67 are disordered. Residues Arg50–Gln125 are interaction with COPS3.

It belongs to the MLF family. As to quaternary structure, interacts with CENPU. Also interacts with NRBP1/MADM, YWHAZ/14-3-3-zeta and HNRPUL2/MANP. NRBP1 recruits a serine kinase which phosphorylates both itself and MLF1. Phosphorylated MLF1 then binds to YWHAZ and is retained in the cytoplasm. Retained in the nucleus by binding to HNRPUL2. Binds to COPS3/CSN3 which is required for suppression of COP1 and activation of p53. Post-translationally, phosphorylation is required for binding to YWHAZ. In terms of tissue distribution, highly expressed in skeletal muscle, heart, testis. Also found in lung, but not in spleen, thymus, bone marrow, liver and kidney.

The protein resides in the cytoplasm. It is found in the nucleus. The protein localises to the cell projection. It localises to the cilium. Its subcellular location is the cytoskeleton. The protein resides in the cilium basal body. Involved in lineage commitment of primary hemopoietic progenitors by restricting erythroid formation and enhancing myeloid formation. Interferes with erythropoietin-induced erythroid terminal differentiation by preventing cells from exiting the cell cycle through suppression of CDKN1B/p27Kip1 levels. Suppresses COP1 activity via CSN3 which activates p53 and induces cell cycle arrest. Binds DNA and affects the expression of a number of genes so may function as a transcription factor in the nucleus. This chain is Myeloid leukemia factor 1 (Mlf1), found in Mus musculus (Mouse).